The sequence spans 300 residues: 3-methyl-2-oxobutanoate hydroxymethyltransferase (300 aa).

Positions 75 and 118 each coordinate Mg(2+). 3-methyl-2-oxobutanoate is bound by residues 75-76 (DS), D118, and K147. A Mg(2+)-binding site is contributed by E149. The active-site Proton acceptor is the E216.

This sequence belongs to the PanB family. In terms of assembly, homodecamer; pentamer of dimers. Requires Mg(2+) as cofactor.

Its subcellular location is the cytoplasm. The catalysed reaction is 3-methyl-2-oxobutanoate + (6R)-5,10-methylene-5,6,7,8-tetrahydrofolate + H2O = 2-dehydropantoate + (6S)-5,6,7,8-tetrahydrofolate. It participates in cofactor biosynthesis; (R)-pantothenate biosynthesis; (R)-pantoate from 3-methyl-2-oxobutanoate: step 1/2. Its function is as follows. Catalyzes the reversible reaction in which hydroxymethyl group from 5,10-methylenetetrahydrofolate is transferred onto alpha-ketoisovalerate to form ketopantoate. The protein is 3-methyl-2-oxobutanoate hydroxymethyltransferase of Verminephrobacter eiseniae (strain EF01-2).